Here is a 170-residue protein sequence, read N- to C-terminus: Ubiquitin-conjugating enzyme E2 2 (170 aa).

The 147-residue stretch at Pro4 to Glu150 folds into the UBC core domain. Cys88 serves as the catalytic Glycyl thioester intermediate. The interval Ser148–Asp170 is disordered. A compositionally biased stretch (acidic residues) spans Asp152–Asp170.

This sequence belongs to the ubiquitin-conjugating enzyme family.

The protein resides in the cytoplasm. It localises to the nucleus. It catalyses the reaction S-ubiquitinyl-[E1 ubiquitin-activating enzyme]-L-cysteine + [E2 ubiquitin-conjugating enzyme]-L-cysteine = [E1 ubiquitin-activating enzyme]-L-cysteine + S-ubiquitinyl-[E2 ubiquitin-conjugating enzyme]-L-cysteine.. It functions in the pathway protein modification; protein ubiquitination. Its function is as follows. Catalyzes the covalent attachment of ubiquitin to other proteins. Plays a role in transcription regulation by catalyzing the monoubiquitination of histone H2B to form H2BK123ub1. H2BK123ub1 gives a specific tag for epigenetic transcriptional activation and is also a prerequisite for H3K4me and H3K79me formation. Also involved in postreplication repair of UV-damaged DNA, in N-end rule-dependent protein degradation and in sporulation. In Eremothecium gossypii (strain ATCC 10895 / CBS 109.51 / FGSC 9923 / NRRL Y-1056) (Yeast), this protein is Ubiquitin-conjugating enzyme E2 2 (UBC2).